The chain runs to 221 residues: uncharacterized protein (221 aa).

The protein to E.coli YheO.

This is an uncharacterized protein from Haemophilus influenzae (strain ATCC 51907 / DSM 11121 / KW20 / Rd).